Consider the following 356-residue polypeptide: MKFLDQAKVYIRSGGGGAGCVSFRREKFVEYGGPDGGDGGRGGDVWIEAVEGLNTLIDFRYQQHFKAARGGHGMGKQRTGARGEDAVLKVPVGTQIYEEDQETMIADLTEVGQRVLLAPGGNGGWGNLRFKSSINQAPRRSNPGEEGEERWIWLRLKLIADAGLVGLPNAGKSTFLSVATAANPKIADYPFTTLHPGLGVVDLGTSTRFVLADIPGLIEGAAEGAGLGHRFLGHVERCKVLLHLIDCTQDDPAGAYRTIRSELEAYDADFADRPEIVALNKIDALTPELVKEQLKQLKKVYKGKPLLISGVTGAGVKDALYAIAQHLGFNNDDIPLPKPSNADEEDPDTDQPWSPV.

The region spanning 1-159 (MKFLDQAKVY…RWIWLRLKLI (159 aa)) is the Obg domain. The region spanning 160–328 (ADAGLVGLPN…ALYAIAQHLG (169 aa)) is the OBG-type G domain. Residues 166 to 173 (GLPNAGKS), 191 to 195 (FTTLH), 213 to 216 (DIPG), 280 to 283 (NKID), and 309 to 311 (SGV) each bind GTP. The Mg(2+) site is built by Ser-173 and Thr-193. The interval 333–356 (DIPLPKPSNADEEDPDTDQPWSPV) is disordered.

This sequence belongs to the TRAFAC class OBG-HflX-like GTPase superfamily. OBG GTPase family. As to quaternary structure, monomer. Mg(2+) is required as a cofactor.

It is found in the cytoplasm. Its function is as follows. An essential GTPase which binds GTP, GDP and possibly (p)ppGpp with moderate affinity, with high nucleotide exchange rates and a fairly low GTP hydrolysis rate. Plays a role in control of the cell cycle, stress response, ribosome biogenesis and in those bacteria that undergo differentiation, in morphogenesis control. The chain is GTPase Obg from Hyphomonas neptunium (strain ATCC 15444).